Consider the following 168-residue polypeptide: Scytalone dehydratase arp1 (168 aa).

Residues tyrosine 29 and tyrosine 49 each coordinate substrate. Active-site residues include histidine 84 and histidine 109. A substrate-binding site is contributed by asparagine 130.

This sequence belongs to the scytalone dehydratase family. In terms of assembly, homotrimer. Each subunit contains an active site, located in the central part of the hydrophobic core of the monomer, which functions independently.

It is found in the endosome. The catalysed reaction is scytalone = 1,3,8-trihydroxynaphthalene + H2O. Its pathway is pigment biosynthesis; melanin biosynthesis. Its activity is regulated as follows. Fenoxanil inhibits arp1 scytalone dehydratase activity. In terms of biological role, scytalone dehydratase; part of the gene cluster that mediates the biosynthesis of dihydroxynaphthalene (DHN)-melanin, a bluish-green pigment and a structural component of the conidial wall. The first step of the pathway is the production of the heptaketide naphtopyrone YWA1 by the polyketide synthase alb1 though condensation of acetyl-CoA with malonyl-CoA. The naphtopyrone YWA1 is then converted to the pentaketide 1,3,6,8-tetrahydroxynaphthalene (1,3,6,8-THN) by the heptaketide hydrolyase ayg1 though chain-length shortening. 1,3,6,8-THN is substrate of the hydroxynaphthalene reductase arp2 to yield scytalone. The scytalone dehydratase arp1 then reduces scytalone to 1,3,8-THN. 1,3,8-THN is also substrate of the hydroxynaphthalene reductase arp2 to yield vermelone. Vermelone is further converted by the multicopper oxidase abr1 to 1,8-DHN. Finally the laccase abr2 transforms 1,8-DHN to DHN-melanin. DHN-melanin biosynthesis appears to be initiated in endosomes where early enzymes (abl1, ayg1, arp1 and arp2) localize, with exocytosis leading to melanin deposition on the cell surface where late enzymes (abr1 and abr2) localize. DHN-melanin is an important structural component of the outer cell wall and is required for the presence of conidial surface hydrophobins. DHN-melanin also plays a crucial role in fungal virulence, including a protective role against the host's immune defenses. DHN-melanin also protects conidia against amoeba predation. This is Scytalone dehydratase arp1 from Aspergillus fumigatus (strain ATCC MYA-4609 / CBS 101355 / FGSC A1100 / Af293) (Neosartorya fumigata).